Reading from the N-terminus, the 429-residue chain is Glucose-1-phosphate adenylyltransferase (429 aa).

Alpha-D-glucose 1-phosphate is bound by residues Gly162, 177–178 (EK), and Ser209.

Belongs to the bacterial/plant glucose-1-phosphate adenylyltransferase family. In terms of assembly, homotetramer.

It catalyses the reaction alpha-D-glucose 1-phosphate + ATP + H(+) = ADP-alpha-D-glucose + diphosphate. The protein operates within glycan biosynthesis; glycogen biosynthesis. Functionally, involved in the biosynthesis of ADP-glucose, a building block required for the elongation reactions to produce glycogen. Catalyzes the reaction between ATP and alpha-D-glucose 1-phosphate (G1P) to produce pyrophosphate and ADP-Glc. This chain is Glucose-1-phosphate adenylyltransferase, found in Picosynechococcus sp. (strain ATCC 27264 / PCC 7002 / PR-6) (Agmenellum quadruplicatum).